The sequence spans 77 residues: Small integral membrane protein 7 (77 aa).

Positions 1–17 (MIGDLLIFGTLLMNAGA) are cleaved as a signal peptide. Residues 18–55 (VLNFKLKKRETQSQGFGDDSGSSSTGENIREFLLSLRY) are Extracellular-facing. The chain crosses the membrane as a helical span at residues 56–76 (FRIFIALWNIFMMFCMIVLFG). A topological domain (cytoplasmic) is located at residue Ser77.

Belongs to the SMIM7 family.

Its subcellular location is the membrane. This chain is Small integral membrane protein 7 (smim7), found in Danio rerio (Zebrafish).